Consider the following 358-residue polypeptide: MREQLMAAETVTGIEWHDGALHLLDQRLLPLEQCWLTCTDVAQVAEAISEMVVRGAPAIGISAAYGLVLALRQRLAEGEGWEESLEEDFLMLGEARPTPANLFWALNRMRERLQRLRPGDDVLAVMEAEAIAIHESDREANLTMAQFGVEQIRKHQGSEQALLTHGNAGALATGGFGTALGVIRAATLEGMVEQVYVCESRPWLQGSRLTAWELAADGVPVTVVADAAAGHLMKTKGISWVVVGADCIAANGDVAAKIGTYQIAVAAMHHGLRFMVVAPSSSIDLNLATGEDIPLETRGVEELLEVAGIQVTADVEVYNPVVDVTPADLIDVIVTEKGVVERPDAAKIAQLMCRKRLH.

Substrate is bound by residues Arg-54–Ala-56, Arg-96, and Gln-205. The active-site Proton donor is Asp-246. Ala-256 to Lys-257 is a binding site for substrate.

The protein belongs to the eIF-2B alpha/beta/delta subunits family. MtnA subfamily.

The enzyme catalyses 5-(methylsulfanyl)-alpha-D-ribose 1-phosphate = 5-(methylsulfanyl)-D-ribulose 1-phosphate. It functions in the pathway amino-acid biosynthesis; L-methionine biosynthesis via salvage pathway; L-methionine from S-methyl-5-thio-alpha-D-ribose 1-phosphate: step 1/6. Its function is as follows. Catalyzes the interconversion of methylthioribose-1-phosphate (MTR-1-P) into methylthioribulose-1-phosphate (MTRu-1-P). This Pseudomonas entomophila (strain L48) protein is Methylthioribose-1-phosphate isomerase.